Consider the following 192-residue polypeptide: MITISEEAQAHFVKLLSKQESGTNIRVFVVNPGTSSAECGVSYCPPDAVEETDTRLTFNGFDAVVDEESAPYLDEAEIDYVTDQMGSQLTLKAPNAKARKVSDDAPLIERINYMIESEINPQLANHGGQVVLTELTDDGYAVLQFGGGCNGCSMVDVTLKDGIEKQMLEQFAGELNGVRDATEHQAGEHSYY.

Cys-149 and Cys-152 together coordinate [4Fe-4S] cluster.

It belongs to the NfuA family. In terms of assembly, homodimer. It depends on [4Fe-4S] cluster as a cofactor.

Involved in iron-sulfur cluster biogenesis. Binds a 4Fe-4S cluster, can transfer this cluster to apoproteins, and thereby intervenes in the maturation of Fe/S proteins. Could also act as a scaffold/chaperone for damaged Fe/S proteins. The polypeptide is Fe/S biogenesis protein NfuA (Alteromonas mediterranea (strain DSM 17117 / CIP 110805 / LMG 28347 / Deep ecotype)).